A 333-amino-acid polypeptide reads, in one-letter code: Photosystem II assembly protein Ycf48 (333 aa).

The signal sequence occupies residues 1-25 (MRVKMFKPLRLVLLIAVSVLLMAAR).

Belongs to the Ycf48 family. Part of early PSII assembly complexes which includes D1 (psbA) and PsbI; not found in mature PSII. Binds to the lumenal side of PSII complexes. Interacts with YidC.

It is found in the cellular thylakoid lumen. In terms of biological role, a factor required for optimal assembly of photosystem II (PSII), acting in the early stages of PSII assembly. Also plays a role in replacement of photodamaged D1 (psbA). Assists YidC in synthesis of chlorophyll-binding proteins. This is Photosystem II assembly protein Ycf48 from Synechococcus sp. (strain JA-2-3B'a(2-13)) (Cyanobacteria bacterium Yellowstone B-Prime).